Consider the following 349-residue polypeptide: Phosphoribosylformylglycinamidine cyclo-ligase (349 aa).

This sequence belongs to the AIR synthase family.

The protein resides in the cytoplasm. The enzyme catalyses 2-formamido-N(1)-(5-O-phospho-beta-D-ribosyl)acetamidine + ATP = 5-amino-1-(5-phospho-beta-D-ribosyl)imidazole + ADP + phosphate + H(+). It participates in purine metabolism; IMP biosynthesis via de novo pathway; 5-amino-1-(5-phospho-D-ribosyl)imidazole from N(2)-formyl-N(1)-(5-phospho-D-ribosyl)glycinamide: step 2/2. The protein is Phosphoribosylformylglycinamidine cyclo-ligase of Listeria monocytogenes serotype 4a (strain HCC23).